The chain runs to 193 residues: Segregation and condensation protein B (193 aa).

The protein belongs to the ScpB family. Homodimer. Homodimerization may be required to stabilize the binding of ScpA to the Smc head domains. Component of a cohesin-like complex composed of ScpA, ScpB and the Smc homodimer, in which ScpA and ScpB bind to the head domain of Smc. The presence of the three proteins is required for the association of the complex with DNA.

It localises to the cytoplasm. In terms of biological role, participates in chromosomal partition during cell division. May act via the formation of a condensin-like complex containing Smc and ScpA that pull DNA away from mid-cell into both cell halves. The sequence is that of Segregation and condensation protein B from Clostridium botulinum (strain Kyoto / Type A2).